A 200-amino-acid chain; its full sequence is Recombination protein RecR (200 aa).

The C4-type zinc-finger motif lies at 58-73 (CSICGNITEDDPCPIC). One can recognise a Toprim domain in the interval 81–177 (SQILVVEQSQ…KVTRLAHGLS (97 aa)).

This sequence belongs to the RecR family.

May play a role in DNA repair. It seems to be involved in an RecBC-independent recombinational process of DNA repair. It may act with RecF and RecO. This is Recombination protein RecR from Limosilactobacillus reuteri (strain DSM 20016) (Lactobacillus reuteri).